A 1848-amino-acid chain; its full sequence is MQKKKSLNLLLALMMVFALVLPSIPALAATSSMSVEFYNSNKSAQTNSITPIIKITNTSDSDLNLNDVKVRYYYTSDGTQGQTFWCDHAGALLGNSYVDNTSKVTANFVKETASPTSTYDTYVEFGFASGRATLKKGQFITIQGRITKSDWSNYTQTNDYSFDASSSTPVVNPKVTGYIGGAKVLGTAPGPDVPSSIINPTSATFDKNVTKQADVKTTMTLNGNTFKTITDANGTALNASTDYSVSGNDVTISKAYLAKQSVGTTTLNFNFSAGNPQKLVITVVDTPVEAVTATIGKVQVNAGETVAVPVNLTKVPAAGLATIELPLTFDSASLEVVSITAGDIVLNPSVNFSSTVSGSTIKLLFLDDTLGSQLITKDGVFATITFKAKAITGTTAKVTSVKLAGTPVVGDAQLQEKPCAVNPGTVTINPIDNRMQISVGTATVKAGEIAAVPVTLTSVPSTGIATAEAQVSFDATLLEVASVTAGDIVLNPTVNFSYTVNGNVIKLLFLDDTLGSQLISKDGVFVTINFKAKAVTSTVTTPVTVSGTPVFADGTLAEVQSKTAAGSVTINIGDPILEPTISPVTATFDKKAPADVATTMTLNGYTFNGITGLTTSDYSISGNVVKISQAYLAKQPVGDLTLTFNFSNGNKTATAKLVVSIKDAPKTVTATVGTATVNAGETVAVPVTLSNVSGISTAELQLSFDATLLEVVSITAGDIVLNPSVNFSSVVNGSTIKLLFLDDTLGSQLISKDGVFATINFKAKSVTSTVTTPVKVSGTPVFADGTLAELSYETVAGSVTINAIGPVKTVTATVGTATVKSGETVAVPVTLSNVPGIATAELQLSFDATLLEVASITVGDIVLNPSVNFSSVVNGSTIKLLFLDDTLGSQLISKDGVLATINFKAKTVTSTVTTPVAVSGTPVFADGTLAELQSKTVAGSVTIEPSQPVKTVTATVGTATVKSGETVAVPVTLSNVPGIATAELQVGFDATLLEVASITVGDIVLNPSVNFSSVVNGSTIKLLFLDDTLGSQLISKDGVLATINFKAKTVTSKVTTPVAVSGTPVFADGTLAELNMKTVAGSVTIEPSQPVKTVTATVGTATVKSGETVAVPVTLSNVPGIATAELQVGFDATLLEVASITVGDIVLNPSVNFSSVVNGSTIKLLFLDDTLGSQLISKDGVLATINFKAKTVTSKVTTPVAVSGTPVFADGTLAELKYETVAGSVTIEPSQPVKTVTATVGTATGKVGETVAVPVTLSNVPGIATAEVQVGFDATLLEVASITAGDIVLNPSVNFSSVVNGSTIKILFLDDTLGSQLISKDGVFATINFKIKAVPSTGTTPVAISGTPVFADGTLAEVQYKTVAGSVTIAAADIKAVKATVGTATGKAGDTVAVPVTLSNVSGIATVELQLSFDATLLEVASITAGDIVLNPSVNFSSVVNGSTIKILFLDDTLGSQLISKDGVFATVNFKVKSTATNSAVTPVTVSGTPVFADGTLAELKSESAAGRLTILPTVIIVDSTVAPTAVTFDKANQADAAITMTLNGNTFSAIKNGTATLVKGTDYTVSENVVTISKAYLAKQTGTVTLEFVFDKGNSAKVVVAVKEIQIVNSTITPVVATFEKTAAKQADVVVTMSLNGNTFSAIKNGTTTLVKGTDYTISGSTVTISKAYLATLADGSATLEFVFNQGASAKLRLTIVPAVVDPVVTDFAVKIDKVSAAAGSTVKVPVSLINVSKVGNVCVAEYKISFDSSVLTYVGTTAGTSIKNPAVNFSSQLNGNTITLLFFDNTIGNELITADGQFATIEFKVNAAATSGTTAEVKVATISSFADASLTEITKVATVNGSVKVS.

The first 28 residues, 1 to 28 (MQKKKSLNLLLALMMVFALVLPSIPALA), serve as a signal peptide directing secretion. The 162-residue stretch at 29-190 (ATSSMSVEFY…GAKVLGTAPG (162 aa)) folds into the CBM3 domain. Cohesin domains are found at residues 291-428 (VTAT…TVTI), 435-570 (MQIS…SVTI), 668-801 (VTAT…SVTI), 810-943 (VTAT…SVTI), 952-1085 (VTAT…SVTI), 1094-1227 (VTAT…SVTI), 1236-1369 (VTAT…SVTI), 1377-1511 (VKAT…RLTI), and 1709-1847 (FAVK…SVKV).

Post-translationally, the N-terminus is blocked. In terms of processing, glycosylated.

It is found in the secreted. Its function is as follows. Binds to cellulose fibers and coordinates cellulase enzymes. This Clostridium cellulovorans protein is Cellulose-binding protein A (cbpA).